A 164-amino-acid polypeptide reads, in one-letter code: V-type proton ATPase subunit c' (164 aa).

The Lumenal portion of the chain corresponds to 1 to 16 (MDMVASDNVYAPLYAP). The helical transmembrane segment at 17-37 (FFGFAGCALAMILSCLGAAIG) threads the bilayer. Over 38–59 (TAKSGIGIAGIGTFKPELIMKS) the chain is Cytoplasmic. A helical membrane pass occupies residues 60 to 80 (LIPVVMSGILAIYGLVVAVLI). Over 81 to 98 (AGNLSPTEEYTLFNGFMH) the chain is Lumenal. The helical transmembrane segment at 99 to 119 (LSCGLCVGFACLSSGYAIGIV) threads the bilayer. Topologically, residues 120-136 (GDVGVRKYMHQPRLFVG) are cytoplasmic. Residues 137–157 (IVLILIFSEVLGLYGMIIALI) form a helical membrane-spanning segment. Residues 158 to 164 (LNTKGSE) lie on the Lumenal side of the membrane.

It belongs to the V-ATPase proteolipid subunit family. In terms of assembly, V-ATPase is a heteromultimeric enzyme composed of a peripheral catalytic V1 complex (components A to H) attached to an integral membrane V0 proton pore complex (components: a, c, c', c'', d, e, f and VOA1). The decameric c-ring forms the proton-conducting pore, and is composed of eight proteolipid subunits c, one subunit c' and one subunit c''.

Its subcellular location is the vacuole membrane. Functionally, proton-conducting pore forming subunit of the V0 complex of vacuolar(H+)-ATPase (V-ATPase), a multisubunit enzyme composed of a peripheral complex (V1) that hydrolyzes ATP and a membrane integral complex (V0) that translocates protons. V-ATPase is responsible for acidifying and maintaining the pH of intracellular compartments. The protein is V-type proton ATPase subunit c' (VMA11) of Candida glabrata (strain ATCC 2001 / BCRC 20586 / JCM 3761 / NBRC 0622 / NRRL Y-65 / CBS 138) (Yeast).